The chain runs to 152 residues: Aspartate carbamoyltransferase regulatory chain (152 aa).

Zn(2+) contacts are provided by C108, C113, C137, and C140.

Belongs to the PyrI family. As to quaternary structure, contains catalytic and regulatory chains. The cofactor is Zn(2+).

Involved in allosteric regulation of aspartate carbamoyltransferase. The chain is Aspartate carbamoyltransferase regulatory chain from Neisseria gonorrhoeae (strain ATCC 700825 / FA 1090).